A 109-amino-acid chain; its full sequence is Parvalbumin, muscle (109 aa).

Ala-1 carries the N-acetylalanine modification. 2 EF-hand domains span residues 38 to 73 (KSPEDVKKVFHILDKDRSGFIEEEELKFVLKGFTPD) and 77 to 109 (LSDKETKALLAAGDKDGDGKIGADEFATMVAES). Asp-51, Asp-53, Ser-55, Glu-62, Asp-90, Asp-92, Asp-94, Lys-96, and Glu-101 together coordinate Ca(2+).

It belongs to the parvalbumin family.

In muscle, parvalbumin is thought to be involved in relaxation after contraction. It binds two calcium ions. In Gallus gallus (Chicken), this protein is Parvalbumin, muscle.